The sequence spans 275 residues: Interleukin-2 receptor subunit alpha (275 aa).

A signal peptide spans 1-21; that stretch reads MEPSLLMWRFFVFIVVPGCVT. A Sushi 1 domain is found at 22-81; the sequence is EACHDDPPSLRNAMFKVFRYEVGTMINCDCKTGFRRVSAVMRCVGDSSHSAWENRCFCNS. Residues 22-243 are Extracellular-facing; sequence EACHDDPPSL…DTFIFTTEYQ (222 aa). 3 disulfide bridges follow: cysteine 24–cysteine 64, cysteine 49–cysteine 77, and cysteine 51–cysteine 79. The N-linked (GlcNAc...) asparagine glycan is linked to asparagine 80. A disordered region spans residues 88-130; that stretch reads QVKQVTPAPEEHREKKHTDAQNQTQPPEEADLPGHCEEPPPWE. Positions 96–106 are enriched in basic and acidic residues; the sequence is PEEHREKKHTD. N-linked (GlcNAc...) asparagine glycosylation occurs at asparagine 109. The segment covering 119 to 130 has biased composition (basic and acidic residues); that stretch reads LPGHCEEPPPWE. The Sushi 2 domain occupies 121–186; it reads GHCEEPPPWE…WTRPRLKCIR (66 aa). 2 disulfide bridges follow: cysteine 123/cysteine 168 and cysteine 152/cysteine 184. A disordered region spans residues 188–221; sequence GEHGQASDDAEPQESTEAPPGSGTFLPTRMAGTT. Residues 244 to 262 form a helical membrane-spanning segment; the sequence is IAVAGCTLLLASILLLSCL. Over 263-275 the chain is Cytoplasmic; it reads TWQRKWKKNRRTI.

Non-covalent dimer of an alpha and a beta subunit. IL2R exists in 3 different forms: a high affinity dimer, an intermediate affinity monomer (beta subunit), and a low affinity monomer (alpha subunit). The high and intermediate affinity forms also associate with a gamma subunit.

The protein resides in the membrane. In terms of biological role, receptor for interleukin-2. The receptor is involved in the regulation of immune tolerance by controlling regulatory T cells (TREGs) activity. TREGs suppress the activation and expansion of autoreactive T-cells. In Bos taurus (Bovine), this protein is Interleukin-2 receptor subunit alpha (IL2RA).